A 259-amino-acid chain; its full sequence is Small ribosomal subunit protein eS4 (259 aa).

Residues 41 to 100 (LPLSLFLRNRLKYALNYTEAKKILTQRVVRVDGKVRTCHKFPTGFMDVVAIERTNEYFRM) enclose the S4 RNA-binding domain.

It belongs to the eukaryotic ribosomal protein eS4 family.

This Caenorhabditis elegans protein is Small ribosomal subunit protein eS4 (rps-4).